The chain runs to 579 residues: Cytochrome P450 monooxygenase prx9 (579 aa).

Residues 6–25 form a helical membrane-spanning segment; the sequence is LPLGSFVGTTLLLFILYKLV. 3 N-linked (GlcNAc...) asparagine glycosylation sites follow: Asn-194, Asn-292, and Asn-390. Cys-512 is a heme binding site.

It belongs to the cytochrome P450 family. Heme serves as cofactor.

Its subcellular location is the membrane. Its pathway is sesquiterpene biosynthesis. In terms of biological role, cytochrome P450 monooxygenase; part of the gene cluster that mediates the biosynthesis of PR-toxin, a bicyclic sesquiterpene belonging to the eremophilane class and acting as a mycotoxin. The first step of the pathway is catalyzed by the aristolochene synthase which performs the cyclization of trans,trans-farnesyl diphosphate (FPP) to the bicyclic sesquiterpene aristolochene. Following the formation of aristolochene, the non-oxygenated aristolochene is converted to the trioxygenated intermediate eremofortin B, via 7-epi-neopetasone. This conversion appears to involve three enzymes, a hydroxysterol oxidase-like enzyme, the quinone-oxidase prx3 that forms the quinone-type-structure in the bicyclic nucleus of aristolochene with the C8-oxo group and the C-3 hydroxyl group, and the P450 monooxygenase prx9 that introduces the epoxide at the double bond between carbons 1 and 2. No monoxy or dioxy-intermediates have been reported to be released to the broth, so these three early oxidative reactions may be coupled together. Eremofortin B is further oxidized by another P450 monooxygenase, that introduces a second epoxide between carbons 7 and 11 prior to acetylation to eremofortin A by the acetyltransferase prx11. The second epoxidation may be performed by a second P450 monooxygenase. After the acetylation step, eremofortin A is converted to eremofortin C and then to PR-toxin. First the conversion of eremofortin A to eremofortin C proceeds by oxidation of the side chain of the molecule at C-12 and is catalyzed by the short-chain oxidoreductase prx1. The cytochrome P450 monooxygenase prx8 also plays a role in this step. The primary alcohol formed at C-12 is finally oxidized by the short-chain alcohol dehydrogenase prx4 that forms PR-toxin. The polypeptide is Cytochrome P450 monooxygenase prx9 (Penicillium rubens (strain ATCC 28089 / DSM 1075 / NRRL 1951 / Wisconsin 54-1255) (Penicillium chrysogenum)).